The sequence spans 434 residues: 3-phosphoshikimate 1-carboxyvinyltransferase (434 aa).

Residues Lys15, Ser16, and Arg20 each contribute to the 3-phosphoshikimate site. Lys15 is a phosphoenolpyruvate binding site. Phosphoenolpyruvate-binding residues include Gly96 and Arg124. 5 residues coordinate 3-phosphoshikimate: Ser169, Gln171, Ser195, Asp319, and Lys346. Gln171 serves as a coordination point for phosphoenolpyruvate. Asp319 functions as the Proton acceptor in the catalytic mechanism. Residues Arg350 and Arg394 each coordinate phosphoenolpyruvate.

Belongs to the EPSP synthase family. As to quaternary structure, monomer.

Its subcellular location is the cytoplasm. It carries out the reaction 3-phosphoshikimate + phosphoenolpyruvate = 5-O-(1-carboxyvinyl)-3-phosphoshikimate + phosphate. Its pathway is metabolic intermediate biosynthesis; chorismate biosynthesis; chorismate from D-erythrose 4-phosphate and phosphoenolpyruvate: step 6/7. Catalyzes the transfer of the enolpyruvyl moiety of phosphoenolpyruvate (PEP) to the 5-hydroxyl of shikimate-3-phosphate (S3P) to produce enolpyruvyl shikimate-3-phosphate and inorganic phosphate. The sequence is that of 3-phosphoshikimate 1-carboxyvinyltransferase from Chlorobium phaeobacteroides (strain DSM 266 / SMG 266 / 2430).